Consider the following 2480-residue polypeptide: Polyprotein P1234 (2480 aa).

The Alphavirus-like MT domain maps to 27–257 (ESQQVTPNDH…ESRRLLKSWH (231 aa)). The nsP1 membrane-binding stretch occupies residues 242-261 (GXTLYIESRRLLKSWHLPSV). 2 S-palmitoyl cysteine; by host lipidation sites follow: C415 and C417. The disordered stretch occupies residues 480 to 506 (YSGDRNEAREAEKEAEETKEAELTREA). Residues 483 to 504 (DRNEAREAEKEAEETKEAELTR) are compositionally biased toward basic and acidic residues. A (+)RNA virus helicase ATP-binding domain is found at 688–840 (DLINPPFHEF…HDICTQVLHK (153 aa)). 719-726 (GVPGSGKS) is a binding site for a ribonucleoside 5'-triphosphate. A (+)RNA virus helicase C-terminal domain is found at 841–989 (SISRRCTLPI…LEEWQEEHDN (149 aa)). The region spanning 1002 to 1324 (DPFQNKAKVC…QRLSSMFACN (323 aa)) is the Peptidase C9 domain. A nucleolus localization signal region spans residues 1003–1022 (PFQNKAKVCWAKCLVQVLET). C1011 serves as the catalytic For cysteine protease nsP2 activity. Positions 1055-1064 (TKYYGVDLDS) match the Nuclear export signal motif. H1080 serves as the catalytic For cysteine protease nsP2 activity. Positions 1179–1183 (PHKRV) match the Nuclear localization signal motif. In terms of domain architecture, Macro spans 1332–1491 (APSYRVRRTD…KIQEAIDRRT (160 aa)). ADP-D-ribose-binding residues include D1341, N1355, G1363, G1443, V1444, and F1445. Residues C1593, C1595, C1618, and C1636 each contribute to the Zn(2+) site. Residue T1675 is modified to Phosphothreonine; by host. 2 consecutive short sequence motifs (FGDF; binding to host G3BP1) follow at residues 1843 to 1846 (FGDF) and 1854 to 1857 (FGDI). Residues 2234-2349 (DAVLETDIAS…HGVRSDPLMA (116 aa)) form the RdRp catalytic domain.

In terms of assembly, interacts with non-structural protein 3. Interacts with RNA-directed RNA polymerase nsP4. Interacts with protease nsP2. interacts with itself. As to quaternary structure, interacts with mRNA-capping enzyme nsP1. Interacts with host DDX1. Interacts with host DDX3. Interacts (via C-terminus) with host G3BP1; this interaction inhibits the formation of host stress granules on viral mRNAs and the nsp3-G3BP1 complexes bind viral RNAs and probably orchestrate the assembly of viral replication complexes. Interacts (via C-terminus) with host G3BP2; this interaction inhibits the formation of host stress granules on viral mRNAs and the nsp3-G3BP2 complexes bind viral RNAs and probably orchestrate the assembly of viral replication complexes. Interacts with mRNA-capping enzyme nsP1. Interacts with protease nsP2. interacts with itself. In terms of assembly, interacts with RNA-directed RNA polymerase nsP4. Interacts with mRNA-capping enzyme nsP1. Interacts with KPNA1/karyopherin-alpha1; this interaction probably allows the active transport of protease nsP2 into the host nucleus. The cofactor is Mg(2+). It depends on Mn(2+) as a cofactor. Specific enzymatic cleavages in vivo yield mature proteins. The processing of the polyprotein is temporally regulated. In early stages (1.7 hpi), P1234 is first cleaved in trans through its nsP2 protease activity, releasing P123' and nsP4, which associate to form the early replication complex. At the same time, P1234 is also cut at the nsP1/nsP2 site early in infection but with lower efficiency. After replication of the viral minus-strand RNAs (4 hpi), the polyproteins are cut at the nsP1/nsP2 and nsP2/nsP3 sites very efficiently, preventing accumulation of P123' and P1234 and allowing the formation of the late replication complex. NsP3'/nsP4 site is not cleaved anymore and P34 is produced rather than nsP4. In terms of processing, specific enzymatic cleavages in vivo yield mature proteins. The processing of the polyprotein is temporally regulated. In early stages (1.7 hpi), P123 is cleaved at the nsP1/nsP2 site with low efficiency. After replication of the viral minus-strand RNAs (4 hpi), the polyproteins are cut at the nsP1/nsP2 and nsP2/nsP3 sites very efficiently, preventing accumulation of P123 and allowing the formation of the late replication complex. Post-translationally, specific enzymatic cleavages in vivo yield mature proteins. The processing of the polyprotein is temporally regulated. In early stages (1.7 hpi), P123' is cleaved at the nsP1/nsP2 site with low efficiency. After replication of the viral minus-strand RNAs (4 hpi), the polyproteins are cut at the nsP1/nsP2 and nsP2/nsP3 sites very efficiently, preventing accumulation of P123' and allowing the formation of the late replication complex. Palmitoylated by host palmitoyltransferases ZDHHC2 and ZDHHC19. In terms of processing, phosphorylated by host on serines and threonines. Post-translationally, ubiquitinated; targets the protein for rapid degradation via the ubiquitin system. Nsp4 is present in extremely low quantities due to low frequency of translation through the amber stop-codon and the degradation by the ubiquitin pathway.

The protein localises to the host cytoplasmic vesicle membrane. The protein resides in the host cell membrane. It is found in the host cell projection. It localises to the host filopodium. Its subcellular location is the host nucleus. The protein localises to the host cytoplasm. The enzyme catalyses GTP + S-adenosyl-L-methionine = N(7)-methyl-GTP + S-adenosyl-L-homocysteine. It catalyses the reaction N(7)-methyl-GTP + L-histidyl-[protein] = N(tele)-(N(7)-methylguanosine 5'-phospho)-L-histidyl-[protein] + diphosphate. The catalysed reaction is N(tele)-(N(7)-methylguanosine 5'-phospho)-L-histidyl-[protein] + a 5'-end diphospho-(purine-ribonucleoside) in mRNA + H(+) = a 5'-end (N(7)-methyl 5'-triphosphoguanosine)-(purine-ribonucleoside) in mRNA + L-histidyl-[protein]. It carries out the reaction a 5'-end triphospho-ribonucleoside in mRNA + H2O = a 5'-end diphospho-ribonucleoside in mRNA + phosphate + H(+). The enzyme catalyses a ribonucleoside 5'-triphosphate + H2O = a ribonucleoside 5'-diphosphate + phosphate + H(+). It catalyses the reaction ATP + H2O = ADP + phosphate + H(+). The catalysed reaction is RNA(n) + a ribonucleoside 5'-triphosphate = RNA(n+1) + diphosphate. It carries out the reaction 4-O-(ADP-D-ribosyl)-L-aspartyl-[protein] + H2O = L-aspartyl-[protein] + ADP-D-ribose + H(+). The enzyme catalyses 5-O-(ADP-D-ribosyl)-L-glutamyl-[protein] + H2O = L-glutamyl-[protein] + ADP-D-ribose + H(+). It catalyses the reaction RNA(n) + ATP = RNA(n)-3'-adenine ribonucleotide + diphosphate. The catalysed reaction is ADP-alpha-D-ribose 1''-phosphate + H2O = ADP-D-ribose + phosphate. Inactive precursor of the viral replicase, which is activated by cleavages carried out by the viral protease nsP2. In terms of biological role, the early replication complex formed by the polyprotein P123 and nsP4 synthesizes minus-strand RNAs. As soon P123 is cleaved into mature proteins, the plus-strand RNAs synthesis begins. Functionally, the early replication complex formed by the polyprotein P123' and nsP4 synthesizes minus-strand RNAs. Polyprotein P123' is a short-lived polyprotein that accumulates during early stage of infection. As soon P123' is cleaved into mature proteins, the plus-strand RNAs synthesis begins. Its function is as follows. Cytoplasmic capping enzyme that catalyzes two virus-specific reactions: methyltransferase and nsP1 guanylyltransferase. mRNA-capping is necessary since all viral RNAs are synthesized in the cytoplasm, and host capping enzymes are restricted to the nucleus. The enzymatic reaction involves a covalent link between 7-methyl-GMP and nsP1, whereas eukaryotic capping enzymes form a covalent complex only with GMP. nsP1 capping consists in the following reactions: GTP is first methylated into 7-methyl-GMP and then is covalently linked to nsP1 to form the m7GMp-nsP1 complex from which 7-methyl-GMP complex is transferred to the mRNA to create the cap structure. NsP1 is also needed for the initiation of the minus-strand RNAs synthesis. Probably serves as a membrane anchor for the replication complex composed of nsP1-nsP4. Palmitoylated nsP1 is remodeling host cell cytoskeleton, and induces filopodium-like structure formation at the surface of the host cell. Multifunctional protein whose N-terminus is part of the RNA polymerase complex and displays NTPase, RNA triphosphatase and helicase activities. NTPase and RNA triphosphatase are involved in viral RNA capping and helicase keeps a check on the dsRNA replication intermediates. The C-terminus harbors a protease that specifically cleaves the polyproteins and releases the mature proteins. Required for the shutoff of minus-strand RNAs synthesis. Specifically inhibits the host IFN response by promoting the nuclear export of host STAT1. Also inhibits host transcription by inducing the rapid proteasome-dependent degradation of POLR2A, a catalytic subunit of the RNAPII complex. The resulting inhibition of cellular protein synthesis serves to ensure maximal viral gene expression and to evade host immune response. In terms of biological role, seems to be essential for minus-strand RNAs and subgenomic 26S mRNAs synthesis. Displays mono-ADP-ribosylhydrolase activity. ADP-ribosylation is a post-translational modification that controls various processes of the host cell and the virus probably needs to revert it for optimal viral replication. Binds proteins of FXR family and sequesters them into the viral RNA replication complexes thereby inhibiting the formation of host stress granules on viral mRNAs. The nsp3'-FXR complexes bind viral RNAs and probably orchestrate the assembly of viral replication complexes, thanks to the ability of FXR family members to self-assemble and bind DNA. Functionally, seems to be essential for minus-strand RNAs and subgenomic 26S mRNAs synthesis. Displays mono-ADP-ribosylhydrolase activity. ADP-ribosylation is a post-translational modification that controls various processes of the host cell and the virus probably needs to revert it for optimal viral replication. Binds proteins of G3BP family and sequesters them into the viral RNA replication complexes thereby inhibiting the formation of host stress granules on viral mRNAs. The nsp3-G3BP complexes bind viral RNAs and probably orchestrate the assembly of viral replication complexes, thanks to the ability of G3BP family members to self-assemble and bind DNA. Its function is as follows. RNA dependent RNA polymerase. Replicates genomic and antigenomic RNA by recognizing replications specific signals. The early replication complex formed by the polyprotein P123 and nsP4 synthesizes minus-strand RNAs. The late replication complex composed of fully processed nsP1-nsP4 is responsible for the production of genomic and subgenomic plus-strand RNAs. This is Polyprotein P1234 from Aedes (Common banded mosquito).